We begin with the raw amino-acid sequence, 206 residues long: Small ribosomal subunit protein uS4 (206 aa).

One can recognise an S4 RNA-binding domain in the interval 96–156 (GRLDNVVYRM…EKSKKQARIK (61 aa)).

The protein belongs to the universal ribosomal protein uS4 family. In terms of assembly, part of the 30S ribosomal subunit. Contacts protein S5. The interaction surface between S4 and S5 is involved in control of translational fidelity.

Its function is as follows. One of the primary rRNA binding proteins, it binds directly to 16S rRNA where it nucleates assembly of the body of the 30S subunit. In terms of biological role, with S5 and S12 plays an important role in translational accuracy. In Actinobacillus succinogenes (strain ATCC 55618 / DSM 22257 / CCUG 43843 / 130Z), this protein is Small ribosomal subunit protein uS4.